The sequence spans 172 residues: Centrin-2 (172 aa).

Over residues 1 to 14 the composition is skewed to polar residues; sequence MASNFKKTTMASSA. The tract at residues 1-31 is disordered; sequence MASNFKKTTMASSAQRKRMSPKPELTEDQKQ. N-acetylalanine is present on A2. A required for self-assembly region spans residues 2–25; it reads ASNFKKTTMASSAQRKRMSPKPEL. At S20 the chain carries Phosphoserine. K22 participates in a covalent cross-link: Glycyl lysine isopeptide (Lys-Gly) (interchain with G-Cter in SUMO2). T26 bears the Phosphothreonine mark. EF-hand domains lie at 28–63, 64–99, 101–136, and 137–172; these read DQKQ…LGFE, PKKE…KMSE, DTKE…LGEN, and LTDE…TSLY. Ca(2+) contacts are provided by D41, D43, T45, T47, and E52. Ca(2+) is bound by residues D150, D152, D154, E156, and E161.

Belongs to the centrin family. As to quaternary structure, monomer. Homooligomer. Interacts with CCP110, SFI1. Component of the XPC complex composed of XPC, RAD23B and CETN2. Component of the nuclear pore complex (NPC)-associated TREX-2 complex (transcription and export complex 2), composed of at least GANP, 2 copies of ENY2, PCID2, SEM1/DSS1, and either centrin CETN2 or centrin CETN3. The TREX-2 complex also associates with ALYREF/ALY and with the nucleoporin NUP153. Interacts with USP49. Forms a microtubule-associated complex with POC5, POC1B and FAM161A. Interacts with CCDC15. In terms of tissue distribution, ubiquitously expressed in all adult tissues tested, with strongest expression in brain, spleen, kidney, small intestine and ovary. Also expressed in the NIH 3T3 fibroblast cell line and peripheral blood lymphocytes.

The protein localises to the cytoplasm. The protein resides in the cytoskeleton. It is found in the microtubule organizing center. It localises to the centrosome. Its subcellular location is the centriole. The protein localises to the nucleus. The protein resides in the nucleus envelope. It is found in the nuclear pore complex. In terms of biological role, plays a fundamental role in microtubule organizing center structure and function. Required for centriole duplication and correct spindle formation. Has a role in regulating cytokinesis and genome stability via cooperation with CALM1 and CCP110. Involved in global genome nucleotide excision repair (GG-NER) by acting as component of the XPC complex. Cooperatively with Rad23b appears to stabilize Xpc. In vitro, stimulates DNA binding of the Xpc:Rad23b dimer. Functionally, the XPC complex is proposed to represent the first factor bound at the sites of DNA damage and together with other core recognition factors, Xpa, RPA and the TFIIH complex, is part of the pre-incision (or initial recognition) complex. The XPC complex recognizes a wide spectrum of damaged DNA characterized by distortions of the DNA helix such as single-stranded loops, mismatched bubbles or single-stranded overhangs. The orientation of XPC complex binding appears to be crucial for inducing a productive NER. XPC complex is proposed to recognize and to interact with unpaired bases on the undamaged DNA strand which is followed by recruitment of the TFIIH complex and subsequent scanning for lesions in the opposite strand in a 5'-to-3' direction by the NER machinery. Cyclobutane pyrimidine dimers (CPDs) which are formed upon UV-induced DNA damage esacpe detection by the XPC complex due to a low degree of structural perurbation. Instead they are detected by the UV-DDB complex which in turn recruits and cooperates with the XPC complex in the respective DNA repair. Its function is as follows. As a component of the TREX-2 complex, involved in the export of mRNAs to the cytoplasm through the nuclear pores. The chain is Centrin-2 (Cetn2) from Mus musculus (Mouse).